The primary structure comprises 54 residues: ATP synthase F(0) complex subunit 8 (54 aa).

The helical transmembrane segment at 4–24 (LNPGPWFAILVFSWLIFLTII) threads the bilayer. Residues 35–54 (NEPTPVSAEKHKTESWDWPW) form a disordered region. Residues 42-54 (AEKHKTESWDWPW) show a composition bias toward basic and acidic residues.

The protein belongs to the ATPase protein 8 family. Component of the ATP synthase complex composed at least of ATP5F1A/subunit alpha, ATP5F1B/subunit beta, ATP5MC1/subunit c (homooctomer), MT-ATP6/subunit a, MT-ATP8/subunit 8, ATP5ME/subunit e, ATP5MF/subunit f, ATP5MG/subunit g, ATP5MK/subunit k, ATP5MJ/subunit j, ATP5F1C/subunit gamma, ATP5F1D/subunit delta, ATP5F1E/subunit epsilon, ATP5PF/subunit F6, ATP5PB/subunit b, ATP5PD/subunit d, ATP5PO/subunit OSCP. ATP synthase complex consists of a soluble F(1) head domain (subunits alpha(3) and beta(3)) - the catalytic core - and a membrane F(0) domain - the membrane proton channel (subunits c, a, 8, e, f, g, k and j). These two domains are linked by a central stalk (subunits gamma, delta, and epsilon) rotating inside the F1 region and a stationary peripheral stalk (subunits F6, b, d, and OSCP).

It localises to the mitochondrion membrane. Functionally, subunit 8, of the mitochondrial membrane ATP synthase complex (F(1)F(0) ATP synthase or Complex V) that produces ATP from ADP in the presence of a proton gradient across the membrane which is generated by electron transport complexes of the respiratory chain. ATP synthase complex consist of a soluble F(1) head domain - the catalytic core - and a membrane F(1) domain - the membrane proton channel. These two domains are linked by a central stalk rotating inside the F(1) region and a stationary peripheral stalk. During catalysis, ATP synthesis in the catalytic domain of F(1) is coupled via a rotary mechanism of the central stalk subunits to proton translocation. In vivo, can only synthesize ATP although its ATP hydrolase activity can be activated artificially in vitro. Part of the complex F(0) domain. This Cyprinus carpio (Common carp) protein is ATP synthase F(0) complex subunit 8.